The primary structure comprises 342 residues: 4-hydroxy-3-methylbut-2-enyl diphosphate reductase (342 aa).

Residue cysteine 47 coordinates [4Fe-4S] cluster. Residues histidine 78 and histidine 111 each coordinate (2E)-4-hydroxy-3-methylbut-2-enyl diphosphate. Dimethylallyl diphosphate is bound by residues histidine 78 and histidine 111. Isopentenyl diphosphate is bound by residues histidine 78 and histidine 111. Cysteine 133 contacts [4Fe-4S] cluster. Histidine 161 contributes to the (2E)-4-hydroxy-3-methylbut-2-enyl diphosphate binding site. Histidine 161 serves as a coordination point for dimethylallyl diphosphate. Histidine 161 provides a ligand contact to isopentenyl diphosphate. Residue glutamate 163 is the Proton donor of the active site. Position 201 (threonine 201) interacts with (2E)-4-hydroxy-3-methylbut-2-enyl diphosphate. Cysteine 231 contacts [4Fe-4S] cluster. 4 residues coordinate (2E)-4-hydroxy-3-methylbut-2-enyl diphosphate: serine 259, serine 260, asparagine 261, and serine 303. Serine 259, serine 260, asparagine 261, and serine 303 together coordinate dimethylallyl diphosphate. Residues serine 259, serine 260, asparagine 261, and serine 303 each contribute to the isopentenyl diphosphate site.

This sequence belongs to the IspH family. Requires [4Fe-4S] cluster as cofactor.

The enzyme catalyses isopentenyl diphosphate + 2 oxidized [2Fe-2S]-[ferredoxin] + H2O = (2E)-4-hydroxy-3-methylbut-2-enyl diphosphate + 2 reduced [2Fe-2S]-[ferredoxin] + 2 H(+). It carries out the reaction dimethylallyl diphosphate + 2 oxidized [2Fe-2S]-[ferredoxin] + H2O = (2E)-4-hydroxy-3-methylbut-2-enyl diphosphate + 2 reduced [2Fe-2S]-[ferredoxin] + 2 H(+). Its pathway is isoprenoid biosynthesis; dimethylallyl diphosphate biosynthesis; dimethylallyl diphosphate from (2E)-4-hydroxy-3-methylbutenyl diphosphate: step 1/1. The protein operates within isoprenoid biosynthesis; isopentenyl diphosphate biosynthesis via DXP pathway; isopentenyl diphosphate from 1-deoxy-D-xylulose 5-phosphate: step 6/6. Functionally, catalyzes the conversion of 1-hydroxy-2-methyl-2-(E)-butenyl 4-diphosphate (HMBPP) into a mixture of isopentenyl diphosphate (IPP) and dimethylallyl diphosphate (DMAPP). Acts in the terminal step of the DOXP/MEP pathway for isoprenoid precursor biosynthesis. In Anaplasma marginale (strain St. Maries), this protein is 4-hydroxy-3-methylbut-2-enyl diphosphate reductase.